The primary structure comprises 246 residues: 1-(5-phosphoribosyl)-5-[(5-phosphoribosylamino)methylideneamino] imidazole-4-carboxamide isomerase (246 aa).

The active-site Proton acceptor is the D8. Residue D129 is the Proton donor of the active site.

This sequence belongs to the HisA/HisF family.

Its subcellular location is the cytoplasm. It carries out the reaction 1-(5-phospho-beta-D-ribosyl)-5-[(5-phospho-beta-D-ribosylamino)methylideneamino]imidazole-4-carboxamide = 5-[(5-phospho-1-deoxy-D-ribulos-1-ylimino)methylamino]-1-(5-phospho-beta-D-ribosyl)imidazole-4-carboxamide. Its pathway is amino-acid biosynthesis; L-histidine biosynthesis; L-histidine from 5-phospho-alpha-D-ribose 1-diphosphate: step 4/9. This Desulforamulus reducens (strain ATCC BAA-1160 / DSM 100696 / MI-1) (Desulfotomaculum reducens) protein is 1-(5-phosphoribosyl)-5-[(5-phosphoribosylamino)methylideneamino] imidazole-4-carboxamide isomerase.